The primary structure comprises 381 residues: MSISMDAGPGFAALQSWSSQVAAFGNSNQTVVDRVSPEMLHLIDAYWYQFPPMNPLWHALLGFTIGVLGFISMMGNGMVIYIFMTTKNLKTPSNLLVVNLAFSDFLMMCAMSPAMVINCYNETWVFGPFACELYGCAGSLFGCASIWTMTMIAFDRYNVIVKGIAAKPMTNNGALLRILGIWAFSLAWTVAPFFGWNRYVPEGNMTACGTDYLTKDWFSRSYIVVYSVFVYFAPLLLIVYSYYYIVQAVSAHEKAMREQAKKMNVASLRSSEAANTSTECKLAKVALMTISLWFMAWTPYLVINYTGILESAPISPLATIWGSLFAKANAVYNPIVYGISHPKYQAALYKRFPVLQCHSTTTDEASSVASGTTVMEEKPTA.

Residues 1 to 62 (MSISMDAGPG…MNPLWHALLG (62 aa)) lie on the Extracellular side of the membrane. Residue Asn-28 is glycosylated (N-linked (GlcNAc...) asparagine). Residues 63-83 (FTIGVLGFISMMGNGMVIYIF) traverse the membrane as a helical segment. The Cytoplasmic segment spans residues 84–96 (MTTKNLKTPSNLL). The chain crosses the membrane as a helical span at residues 97–117 (VVNLAFSDFLMMCAMSPAMVI). At 118 to 133 (NCYNETWVFGPFACEL) the chain is on the extracellular side. A glycan (N-linked (GlcNAc...) asparagine) is linked at Asn-121. Cys-131 and Cys-208 are disulfide-bonded. The helical transmembrane segment at 134–154 (YGCAGSLFGCASIWTMTMIAF) threads the bilayer. Over 155 to 173 (DRYNVIVKGIAAKPMTNNG) the chain is Cytoplasmic. The chain crosses the membrane as a helical span at residues 174–194 (ALLRILGIWAFSLAWTVAPFF). Residues 195–221 (GWNRYVPEGNMTACGTDYLTKDWFSRS) are Extracellular-facing. An N-linked (GlcNAc...) asparagine glycan is attached at Asn-204. A helical membrane pass occupies residues 222 to 242 (YIVVYSVFVYFAPLLLIVYSY). Residues 243 to 284 (YYIVQAVSAHEKAMREQAKKMNVASLRSSEAANTSTECKLAK) are Cytoplasmic-facing. Residues 285–305 (VALMTISLWFMAWTPYLVINY) form a helical membrane-spanning segment. The Extracellular segment spans residues 306-316 (TGILESAPISP). Residues 317 to 339 (LATIWGSLFAKANAVYNPIVYGI) form a helical membrane-spanning segment. Residues 340-381 (SHPKYQAALYKRFPVLQCHSTTTDEASSVASGTTVMEEKPTA) are Cytoplasmic-facing.

Belongs to the G-protein coupled receptor 1 family. Opsin subfamily. In terms of tissue distribution, expressed bilaterally in dorsal and ventral anterior protocerebral cells and bilaterally in the dorsal posterior protocerebral and lateral posterior tritocerebral cells (at protein level). Expressed in the larval brain but not in the subesophageal ganglion or thoracic ganglion.

It localises to the membrane. In terms of biological role, visual pigments are the light-absorbing molecules that mediate vision. They consist of an apoprotein, opsin, covalently linked to cis-retinal. May play a role in photoperiodic photoreception. The sequence is that of Ceropsin from Bombyx mori (Silk moth).